Consider the following 251-residue polypeptide: HTH-type transcriptional regulator UlaR (251 aa).

The region spanning 3–58 (EAQRHQILLEMLAQLGFVTVEKVVERLGISPATARRDINKLGESGKLKKVRNGAEA) is the HTH deoR-type domain. The H-T-H motif DNA-binding region spans 20–39 (VTVEKVVERLGISPATARRD).

It is found in the cytoplasm. In terms of biological role, represses ulaG and the ulaABCDEF operon. The sequence is that of HTH-type transcriptional regulator UlaR from Shigella flexneri.